The sequence spans 355 residues: Probable nitronate monooxygenase (355 aa).

FMN contacts are provided by residues Asn-71, Gln-175, Gly-180, Gly-218, and 237-240 (QMGT).

This sequence belongs to the nitronate monooxygenase family. NMO class I subfamily. The cofactor is FMN.

It carries out the reaction 3 propionate 3-nitronate + 3 O2 + H2O = 3 3-oxopropanoate + 2 nitrate + nitrite + H2O2 + 3 H(+). Its function is as follows. Nitronate monooxygenase that uses molecular oxygen to catalyze the oxidative denitrification of alkyl nitronates. Acts on propionate 3-nitronate (P3N), the presumed physiological substrate. Probably functions in the detoxification of P3N, a metabolic poison produced by plants and fungi as a defense mechanism. The chain is Probable nitronate monooxygenase from Staphylococcus aureus (strain MSSA476).